Consider the following 115-residue polypeptide: NADH-ubiquinone oxidoreductase chain 3 (115 aa).

The next 3 helical transmembrane spans lie at L4–L24, F55–I75, and I84–Y104.

It belongs to the complex I subunit 3 family. In terms of assembly, core subunit of respiratory chain NADH dehydrogenase (Complex I) which is composed of 45 different subunits. Interacts with TMEM186. Interacts with TMEM242.

The protein localises to the mitochondrion inner membrane. It carries out the reaction a ubiquinone + NADH + 5 H(+)(in) = a ubiquinol + NAD(+) + 4 H(+)(out). Its function is as follows. Core subunit of the mitochondrial membrane respiratory chain NADH dehydrogenase (Complex I) which catalyzes electron transfer from NADH through the respiratory chain, using ubiquinone as an electron acceptor. Essential for the catalytic activity of complex I. In Ochrotomys nuttalli (Golden mouse), this protein is NADH-ubiquinone oxidoreductase chain 3.